A 514-amino-acid chain; its full sequence is GMP synthase [glutamine-hydrolyzing] (514 aa).

In terms of domain architecture, Glutamine amidotransferase type-1 spans 9-199; it reads MILVLDFGGQ…LFEVCQCTGD (191 aa). Catalysis depends on Cys86, which acts as the Nucleophile. Residues His173 and Glu175 contribute to the active site. One can recognise a GMPS ATP-PPase domain in the interval 200-389; that stretch reads WSMENFIEIE…LGLSDEIVWR (190 aa). ATP is bound at residue 227 to 233; sequence SGGVDSS.

Homodimer.

It carries out the reaction XMP + L-glutamine + ATP + H2O = GMP + L-glutamate + AMP + diphosphate + 2 H(+). It functions in the pathway purine metabolism; GMP biosynthesis; GMP from XMP (L-Gln route): step 1/1. Catalyzes the synthesis of GMP from XMP. In Exiguobacterium sibiricum (strain DSM 17290 / CCUG 55495 / CIP 109462 / JCM 13490 / 255-15), this protein is GMP synthase [glutamine-hydrolyzing].